Reading from the N-terminus, the 254-residue chain is Aspartate/glutamate leucyltransferase (254 aa).

This sequence belongs to the R-transferase family. Bpt subfamily.

Its subcellular location is the cytoplasm. The catalysed reaction is N-terminal L-glutamyl-[protein] + L-leucyl-tRNA(Leu) = N-terminal L-leucyl-L-glutamyl-[protein] + tRNA(Leu) + H(+). The enzyme catalyses N-terminal L-aspartyl-[protein] + L-leucyl-tRNA(Leu) = N-terminal L-leucyl-L-aspartyl-[protein] + tRNA(Leu) + H(+). Functionally, functions in the N-end rule pathway of protein degradation where it conjugates Leu from its aminoacyl-tRNA to the N-termini of proteins containing an N-terminal aspartate or glutamate. In Xylella fastidiosa (strain M23), this protein is Aspartate/glutamate leucyltransferase.